A 283-amino-acid polypeptide reads, in one-letter code: Thymidylate synthase (283 aa).

Arg22 contacts dUMP. The active-site Nucleophile is the Cys160. DUMP-binding positions include 180-183 (RSCD), Asn191, and 221-223 (HIY). Asp183 provides a ligand contact to (6R)-5,10-methylene-5,6,7,8-tetrahydrofolate. Ser282 lines the (6R)-5,10-methylene-5,6,7,8-tetrahydrofolate pocket.

It belongs to the thymidylate synthase family. Bacterial-type ThyA subfamily. In terms of assembly, homodimer.

The protein resides in the cytoplasm. It carries out the reaction dUMP + (6R)-5,10-methylene-5,6,7,8-tetrahydrofolate = 7,8-dihydrofolate + dTMP. The protein operates within pyrimidine metabolism; dTTP biosynthesis. In terms of biological role, catalyzes the reductive methylation of 2'-deoxyuridine-5'-monophosphate (dUMP) to 2'-deoxythymidine-5'-monophosphate (dTMP) while utilizing 5,10-methylenetetrahydrofolate (mTHF) as the methyl donor and reductant in the reaction, yielding dihydrofolate (DHF) as a by-product. This enzymatic reaction provides an intracellular de novo source of dTMP, an essential precursor for DNA biosynthesis. In Marinomonas sp. (strain MWYL1), this protein is Thymidylate synthase.